Reading from the N-terminus, the 230-residue chain is Ribose-5-phosphate isomerase A (230 aa).

Residues 31–34 (TGST), 88–91 (DGSD), and 101–104 (KGGG) contribute to the substrate site. The Proton acceptor role is filled by E110. Residue K128 coordinates substrate.

Belongs to the ribose 5-phosphate isomerase family. Homodimer.

The enzyme catalyses aldehydo-D-ribose 5-phosphate = D-ribulose 5-phosphate. Its pathway is carbohydrate degradation; pentose phosphate pathway; D-ribose 5-phosphate from D-ribulose 5-phosphate (non-oxidative stage): step 1/1. In terms of biological role, catalyzes the reversible conversion of ribose-5-phosphate to ribulose 5-phosphate. This Lactobacillus helveticus (strain DPC 4571) protein is Ribose-5-phosphate isomerase A.